Consider the following 593-residue polypeptide: Glutamate decarboxylase 1 (593 aa).

Residues 1–12 (MASSTPSPATSS) show a composition bias toward low complexity. The interval 1 to 22 (MASSTPSPATSSNAGADPNTTN) is disordered. S77 is subject to Phosphoserine. Position 189–191 (189–191 (QLS)) interacts with 4-aminobutanoate. Residue K404 is modified to N6-(pyridoxal phosphate)lysine. Residue R566 participates in 4-aminobutanoate binding.

This sequence belongs to the group II decarboxylase family. As to quaternary structure, homodimer. Requires pyridoxal 5'-phosphate as cofactor. Expressed in brain and pancreatic islets.

It catalyses the reaction L-glutamate + H(+) = 4-aminobutanoate + CO2. In terms of biological role, catalyzes the synthesis of the inhibitory neurotransmitter gamma-aminobutyric acid (GABA) with pyridoxal 5'-phosphate as cofactor. The protein is Glutamate decarboxylase 1 (Gad1) of Rattus norvegicus (Rat).